A 152-amino-acid chain; its full sequence is MSFDFMTPNKTKNSTVGNYAIVETSGTQFWLEADRYYDIDRINANVDETVTLDKVLLINDQKGFAIGKPYIKGASVQLKVMAHKRGPKIIVYKMRPKKKTRTKNGHRQELTRVMVTSISNGEKPKKATTSAKPNTKKPSTAVKSSKVEKTPE.

Positions 115–152 are disordered; sequence VTSISNGEKPKKATTSAKPNTKKPSTAVKSSKVEKTPE. Positions 127 to 143 are enriched in polar residues; sequence ATTSAKPNTKKPSTAVK.

It belongs to the bacterial ribosomal protein bL21 family. Part of the 50S ribosomal subunit. Contacts protein L20.

Its function is as follows. This protein binds to 23S rRNA in the presence of protein L20. The protein is Large ribosomal subunit protein bL21 of Prochlorococcus marinus (strain SARG / CCMP1375 / SS120).